The chain runs to 365 residues: Chaperone protein DnaJ (365 aa).

Residues 4-70 form the J domain; the sequence is DYYKILGVDR…QKRRMYDQTG (67 aa). The segment at 139-220 adopts a CR-type zinc-finger fold; the sequence is GTEKRIKYRR…CNGTGTVVVN (82 aa). Residues cysteine 152, cysteine 155, cysteine 168, cysteine 171, cysteine 194, cysteine 197, cysteine 208, and cysteine 211 each coordinate Zn(2+). CXXCXGXG motif repeat units follow at residues 152 to 159, 168 to 175, 194 to 201, and 208 to 215; these read CPDCNGTG, CPTCNGTG, CQTCGGRG, and CPRCNGTG.

Belongs to the DnaJ family. Homodimer. Zn(2+) serves as cofactor.

The protein resides in the cytoplasm. Participates actively in the response to hyperosmotic and heat shock by preventing the aggregation of stress-denatured proteins and by disaggregating proteins, also in an autonomous, DnaK-independent fashion. Unfolded proteins bind initially to DnaJ; upon interaction with the DnaJ-bound protein, DnaK hydrolyzes its bound ATP, resulting in the formation of a stable complex. GrpE releases ADP from DnaK; ATP binding to DnaK triggers the release of the substrate protein, thus completing the reaction cycle. Several rounds of ATP-dependent interactions between DnaJ, DnaK and GrpE are required for fully efficient folding. Also involved, together with DnaK and GrpE, in the DNA replication of plasmids through activation of initiation proteins. The chain is Chaperone protein DnaJ from Thermoplasma acidophilum (strain ATCC 25905 / DSM 1728 / JCM 9062 / NBRC 15155 / AMRC-C165).